Reading from the N-terminus, the 179-residue chain is Large ribosomal subunit protein uL5 (179 aa).

The protein belongs to the universal ribosomal protein uL5 family. In terms of assembly, part of the 50S ribosomal subunit; part of the 5S rRNA/L5/L18/L25 subcomplex. Contacts the 5S rRNA and the P site tRNA. Forms a bridge to the 30S subunit in the 70S ribosome.

Its function is as follows. This is one of the proteins that bind and probably mediate the attachment of the 5S RNA into the large ribosomal subunit, where it forms part of the central protuberance. In the 70S ribosome it contacts protein S13 of the 30S subunit (bridge B1b), connecting the 2 subunits; this bridge is implicated in subunit movement. Contacts the P site tRNA; the 5S rRNA and some of its associated proteins might help stabilize positioning of ribosome-bound tRNAs. The sequence is that of Large ribosomal subunit protein uL5 from Shewanella oneidensis (strain ATCC 700550 / JCM 31522 / CIP 106686 / LMG 19005 / NCIMB 14063 / MR-1).